Reading from the N-terminus, the 231-residue chain is Ribosomal RNA small subunit methyltransferase G (231 aa).

S-adenosyl-L-methionine-binding positions include glycine 92, leucine 97, 143-144 (VE), and arginine 162.

This sequence belongs to the methyltransferase superfamily. RNA methyltransferase RsmG family.

The protein resides in the cytoplasm. The catalysed reaction is guanosine(527) in 16S rRNA + S-adenosyl-L-methionine = N(7)-methylguanosine(527) in 16S rRNA + S-adenosyl-L-homocysteine. Specifically methylates the N7 position of guanine in position 527 of 16S rRNA. The protein is Ribosomal RNA small subunit methyltransferase G of Burkholderia thailandensis (strain ATCC 700388 / DSM 13276 / CCUG 48851 / CIP 106301 / E264).